We begin with the raw amino-acid sequence, 251 residues long: MRFDNKVVVITGAGNGMGEAAARRFSAEGAIVVLADWAKEAVDKVAASLPKGRAMAVHIDVSDHVAVEKMMNEVAEKLGRIDVLLNNAGVHVAGSVLETSIDDWRRIAGVDIDGVVFCSKFALPHLLKTKGCIVNTASVSGLGGDWGAAYYCAAKGAVVNLTRAMALDHGGDGVRINSVCPSLVKTNMTNGWPQEIRDKFNERIALGRAAEPEEVAAVMAFLASDDASFINGANIPVDGGATASDGQPKIV.

The NAD(+) site is built by Asn-15, Met-17, Asp-36, Asp-60, Val-61, and Asn-87. Residues Ser-138, Ser-140, and Tyr-151 each coordinate (R)-acetoin. Ser-138 lines the (S)-acetoin pocket. Residues Tyr-151, Lys-155, Val-184, and Thr-186 each coordinate NAD(+). Tyr-151 is a binding site for (S)-acetoin. Tyr-151 acts as the Proton acceptor in catalysis.

This sequence belongs to the short-chain dehydrogenases/reductases (SDR) family. Homotetramer; dimer of dimers.

It catalyses the reaction (R,S)-butane-2,3-diol + NAD(+) = (R)-acetoin + NADH + H(+). It carries out the reaction (S,S)-butane-2,3-diol + NAD(+) = (S)-acetoin + NADH + H(+). The catalysed reaction is (S)-acetoin + NAD(+) = diacetyl + NADH + H(+). With respect to regulation, oxidation of meso-2,3-butanediol is enhanced in the presence of Fe(2+). Reduction of diacetyl and (3S/3R)-acetoin is slightly enhanced in the presence of Mg(2+) and Mn(2+). Activity is inhibited by several metal ions, particularly Fe(3+) for reduction of diacetyl and acetoin. Catalyzes the NAD-dependent oxidation of meso-2,3-butanediol to (3R)-acetoin, and of (2S,3S)-2,3-butanediol to (3S)-acetoin, with much lower efficiency. Can also oxidize several primary alcohols such as glycerol, 1-2-pentanediol and 1,2-propanediol, with lower activity. Cannot use (2R,3R)-2,3-butanediol. In the presence of NADH, catalyzes the reduction of (3R)-acetoin to meso-2,3-butanediol, of (3S)-acetoin to (2S,3S)-2,3-butanediol and of diacetyl to (3S)-acetoin. No activity is detected with NADPH/NADP(+). The polypeptide is Meso-2,3-butanediol dehydrogenase (Serratia marcescens).